The primary structure comprises 417 residues: Hydroxysteroid dehydrogenase-like protein 2 (417 aa).

NADP(+) is bound by residues 17–23 (GASRGIG), Lys42, and Asp74. Catalysis depends on Tyr168, which acts as the Proton acceptor. Lys172 lines the NADP(+) pocket. Residues 306-414 (SSPLQETFKA…KLEKILGQMN (109 aa)) form the SCP2 domain.

Belongs to the short-chain dehydrogenases/reductases (SDR) family.

It is found in the peroxisome. The protein resides in the mitochondrion. Functionally, has apparently no steroid dehydrogenase activity. Might act as a metabolic regulator that affects systemic adaptation to nutritional cues. In Xenopus tropicalis (Western clawed frog), this protein is Hydroxysteroid dehydrogenase-like protein 2 (hsdl2).